We begin with the raw amino-acid sequence, 426 residues long: Tyrosine-protein phosphatase non-receptor type 20 (426 aa).

Residues 1–10 (MSSPRKVRGK) show a composition bias toward basic residues. A disordered region spans residues 1–58 (MSSPRKVRGKTGRDNDEEEGNSGNLNLRNSLPSSSQKMTPTKPIFGNKMNSENVKPSH). Positions 21–35 (NSGNLNLRNSLPSSS) are enriched in low complexity. Ser-76 carries the phosphoserine modification. The segment covering 95–117 (NSMDSETAGPSKTVSPVLSGSSR) has biased composition (polar residues). The disordered stretch occupies residues 95–124 (NSMDSETAGPSKTVSPVLSGSSRLSKDTET). A Phosphoserine modification is found at Ser-127. In terms of domain architecture, Tyrosine-protein phosphatase spans 165-418 (IIREFLELEQ…QFCYEIVLEV (254 aa)). Substrate-binding positions include Asp-329, 359–365 (CSAGVGR), and Gln-403. Catalysis depends on Cys-359, which acts as the Phosphocysteine intermediate.

It belongs to the protein-tyrosine phosphatase family. Non-receptor class subfamily. Testis-specific. Specifically expressed in testicular germ cells that undergo meiosis (at protein level).

The protein localises to the nucleus. It is found in the cytoplasm. It localises to the cytoskeleton. Its subcellular location is the microtubule organizing center. The protein resides in the centrosome. It carries out the reaction O-phospho-L-tyrosyl-[protein] + H2O = L-tyrosyl-[protein] + phosphate. Its function is as follows. Tyrosine-protein phosphatase targeted to sites of actin polymerization in response of varied extracellular stimuli. Has tyrosine phosphatase activity towards various tyrosyl phosphorylated substrates. This Mus musculus (Mouse) protein is Tyrosine-protein phosphatase non-receptor type 20 (Ptpn20).